Reading from the N-terminus, the 81-residue chain is Small ribosomal subunit protein bS16 (81 aa).

This sequence belongs to the bacterial ribosomal protein bS16 family.

The polypeptide is Small ribosomal subunit protein bS16 (Teredinibacter turnerae (strain ATCC 39867 / T7901)).